Reading from the N-terminus, the 257-residue chain is uncharacterized protein (257 aa).

The helical transmembrane segment at leucine 7–threonine 27 threads the bilayer.

The protein belongs to the staphylococcal tandem lipoprotein family.

It localises to the cell membrane. This is an uncharacterized protein from Staphylococcus aureus (strain Mu50 / ATCC 700699).